Here is a 314-residue protein sequence, read N- to C-terminus: DNA-directed RNA polymerase subunit alpha (314 aa).

Positions 1 to 228 are alpha N-terminal domain (alpha-NTD); the sequence is MIEIEKPKIE…EHLNIFVGLT (228 aa). Positions 245 to 314 are alpha C-terminal domain (alpha-CTD); that stretch reads KEKVLEMTIE…ELGLSLRKDD (70 aa).

This sequence belongs to the RNA polymerase alpha chain family. As to quaternary structure, homodimer. The RNAP catalytic core consists of 2 alpha, 1 beta, 1 beta' and 1 omega subunit. When a sigma factor is associated with the core the holoenzyme is formed, which can initiate transcription.

The catalysed reaction is RNA(n) + a ribonucleoside 5'-triphosphate = RNA(n+1) + diphosphate. In terms of biological role, DNA-dependent RNA polymerase catalyzes the transcription of DNA into RNA using the four ribonucleoside triphosphates as substrates. The sequence is that of DNA-directed RNA polymerase subunit alpha from Geobacillus kaustophilus (strain HTA426).